Here is a 448-residue protein sequence, read N- to C-terminus: Solute carrier family 52, riboflavin transporter, member 1 (448 aa).

The next 5 helical transmembrane spans lie at 14–34, 47–67, 79–99, 124–144, and 147–167; these read LLVALFGMGSWAAVNGIWVEL, LPSYLSVVVALGNLGLLVVTL, VPIQVVQVLSVVGTALLAPLW, ACCTSNVTFLPFLSHLPPPFL, and FFLGQGLSALLPCVLALVQGV. Asn-178 carries an N-linked (GlcNAc...) asparagine glycan. A helical transmembrane segment spans residues 191–211; the sequence is FPASTFFWALTALLVTSAAAF. The segment at 225–267 is disordered; the sequence is TTGGSGPELQLGSPGAEEEEKEEEEALPLQEPPSQAAGTIPGP. A compositionally biased stretch (acidic residues) spans 240–250; that stretch reads AEEEEKEEEEA. The next 5 helical transmembrane spans lie at 280 to 300, 315 to 335, 342 to 362, 369 to 389, and 407 to 427; these read AFLLGLMAFTSAVTNGVLPSV, LAVVLGSAANPLACFLAMGVL, LVGLSLLGMLFGAYLMALAIL, VGTTAGVVLVVLSWVLCLCVF, and ALLAAGVAIQVGSLLGAGAMF.

The protein belongs to the riboflavin transporter family. In terms of tissue distribution, widely expressed. Highly expressed in the testis, placenta and small intestine. Expressed at lower level in other tissues.

It localises to the cell membrane. It carries out the reaction riboflavin(in) = riboflavin(out). With respect to regulation, the activity is strongly inhibited by riboflavin analogs, such as lumiflavin. Weakly inhibited by flavin adenine dinucleotide (FAD). Plasma membrane transporter mediating the uptake by cells of the water soluble vitamin B2/riboflavin that plays a key role in biochemical oxidation-reduction reactions of the carbohydrate, lipid, and amino acid metabolism. Humans are unable to synthesize vitamin B2/riboflavin and must obtain it via intestinal absorption. In terms of biological role, (Microbial infection) May function as a cell receptor to retroviral envelopes similar to the porcine endogenous retrovirus (PERV-A). This is Solute carrier family 52, riboflavin transporter, member 1 from Homo sapiens (Human).